The following is a 450-amino-acid chain: Calcium-binding and coiled-coil domain-containing protein 2 (450 aa).

The CLIR signature appears at 133–136; it reads ILVV. Positions 135 to 349 form a coiled coil; the sequence is VVTTQSEVEE…RENNRLLSYM (215 aa). An LIR-like motif is present at residues 203 to 206; it reads DCWE. The tract at residues 371 to 381 is interaction with LGALS8; it reads DPGLVFGNPYS. Residues 395–450 are interaction with MYO6; sequence KKCPTCKSDFAADVFDHNLALEQHLQTLSLNCPICDKTFPAKEKQIFEDHVFCHTL. The segment at 423 to 448 adopts a UBZ1-type zinc-finger fold; sequence SLNCPICDKTFPAKEKQIFEDHVFCH. Zn(2+)-binding residues include Cys426, Cys429, His444, and His448.

Belongs to the CALCOCO family. Dimer. Part of a complex consisting of CALCOCO2, TAX1BP1 and MYO6. Interacts with GEMIN4. Interacts with ATG8 family members MAP1LC3A, MAP1LC3B, GABARAP, GABARAPL1 and GABARAPL2. Interacts with ATG8 family member MAP1LC3C. Interacts with LGALS8. Interacts with TOM1; the interaction is indirect and is mediated by MYO6, which acts as a bridge between TOM1 and CALCOCO2. Interacts with AZI2.

Its subcellular location is the cytoplasm. It localises to the perinuclear region. The protein localises to the cytoskeleton. It is found in the cytoplasmic vesicle. The protein resides in the autophagosome membrane. Its function is as follows. Xenophagy-specific receptor required for autophagy-mediated intracellular bacteria degradation. Acts as an effector protein of galectin-sensed membrane damage that restricts the proliferation of infecting pathogens upon entry into the cytosol by targeting LGALS8-associated bacteria for autophagy. Initially orchestrates bacteria targeting to autophagosomes and subsequently ensures pathogen degradation by regulating pathogen-containing autophagosome maturation. Bacteria targeting to autophagosomes relies on its interaction with MAP1LC3A, MAP1LC3B and/or GABARAPL2, whereas regulation of pathogen-containing autophagosome maturation requires the interaction with MAP3LC3C. May play a role in ruffle formation and actin cytoskeleton organization and seems to negatively regulate constitutive secretion. The sequence is that of Calcium-binding and coiled-coil domain-containing protein 2 from Bos taurus (Bovine).